The chain runs to 652 residues: Protein phosphatase Slingshot homolog 3 (652 aa).

The span at 1–16 (MALVTVSRSPPASGHS) shows a compositional bias: polar residues. Positions 1 to 31 (MALVTVSRSPPASGHSTPVGPTDRVIRRRGR) are disordered. At A2 the chain carries N-acetylalanine. 4 positions are modified to phosphoserine: S9, S37, S85, and S87. The segment at 43–91 (GAVLGLQDGGEGNDAAEADPEPMEKPSGEEQPAEDQTDNGQGSQSPWKQ) is disordered. Residues 80-90 (DNGQGSQSPWK) are compositionally biased toward polar residues. The DEK-C domain occupies 266–321 (EQMEQAILAELWQVLDASDLDSVTSKEIRQALELRLGCPLQQYRDFIDNQMLLLMA). A Tyrosine-protein phosphatase domain is found at 325-466 (RASRIFPHLY…LQTYQGILTA (142 aa)). The active-site Phosphocysteine intermediate is C410. 3 disordered regions span residues 484–526 (EPLA…LGLR), 540–580 (LLEP…KGGQ), and 610–652 (RAFQ…EGKA). A compositionally biased stretch (low complexity) spans 540-552 (LLEPSSEPESTTE). Residues 642–652 (SVDDSREEGKA) show a composition bias toward basic and acidic residues.

It belongs to the protein-tyrosine phosphatase family. Does not bind to, or colocalize with, filamentous actin.

It is found in the cytoplasm. The protein localises to the cytoskeleton. The protein resides in the nucleus. The catalysed reaction is O-phospho-L-tyrosyl-[protein] + H2O = L-tyrosyl-[protein] + phosphate. The enzyme catalyses O-phospho-L-seryl-[protein] + H2O = L-seryl-[protein] + phosphate. It carries out the reaction O-phospho-L-threonyl-[protein] + H2O = L-threonyl-[protein] + phosphate. Its function is as follows. Protein phosphatase which may play a role in the regulation of actin filament dynamics. Can dephosphorylate and activate the actin binding/depolymerizing factor cofilin, which subsequently binds to actin filaments and stimulates their disassembly. The protein is Protein phosphatase Slingshot homolog 3 (Ssh3) of Rattus norvegicus (Rat).